We begin with the raw amino-acid sequence, 139 residues long: MSGLSRIGVAIDSDLLDKFDSLIGQRGYTNRSEAFRDLIRDELVEKTWESPESQVVGTVTLVYDHHVRLLNEKLTGIQHDFHHSILSTLHVHLDHDNCLEVLVVRGRSADVRKVADVLISTKGVKHGRLTITTTGAEMK.

Ni(2+) is bound by residues H79, H90, H92, and C98.

The protein belongs to the transcriptional regulatory CopG/NikR family. Ni(2+) is required as a cofactor.

In terms of biological role, transcriptional regulator. The polypeptide is Putative nickel-responsive regulator (Solibacter usitatus (strain Ellin6076)).